Here is a 289-residue protein sequence, read N- to C-terminus: Elongation factor Ts (289 aa).

The interval 82–85 (TDFL) is involved in Mg(2+) ion dislocation from EF-Tu.

This sequence belongs to the EF-Ts family.

It localises to the cytoplasm. Functionally, associates with the EF-Tu.GDP complex and induces the exchange of GDP to GTP. It remains bound to the aminoacyl-tRNA.EF-Tu.GTP complex up to the GTP hydrolysis stage on the ribosome. In Pseudomonas aeruginosa (strain LESB58), this protein is Elongation factor Ts.